A 176-amino-acid polypeptide reads, in one-letter code: Skp1-related protein (176 aa).

The protein belongs to the SKP1 family. Probable component of the SCF(sel-10) E3 ubiquitin-protein ligase complex containing F-box domain-containing protein sel-10 as the substrate recognition component. Interacts with cul-1. May interact with the F-box protein mec-15. Interacts with dre-1. Interacts with syg-1. Interacts with sel-10. Ubiquitously expressed in the adult.

Its function is as follows. Probable essential component of SCF (SKP1-CUL1-F-box protein) E3 ubiquitin-protein ligase complexes, which mediate the ubiquitination and subsequent proteasomal degradation of target proteins. Regulates cell proliferation during embryonic and larval development. Involved in synapse elimination in early synapse development. May negatively regulate the apoptotic activity of cep-1 in response to genotoxic stress. Plays a role in sex determination. This chain is Skp1-related protein, found in Caenorhabditis elegans.